Reading from the N-terminus, the 309-residue chain is Uracil phosphoribosyltransferase homolog (309 aa).

A disordered region spans residues 1–41 (MATELQCPDSMPCHNQQVNSASTPSPEQLRPGDPILDHAGG). The span at 13 to 26 (CHNQQVNSASTPSP) shows a compositional bias: polar residues. Position 25 is a phosphoserine (serine 25). Residues arginine 133, arginine 142, and 176-179 (EKGN) each bind GTP. Arginine 186 is a 5-phospho-alpha-D-ribose 1-diphosphate binding site. Positions 203 and 232 each coordinate GTP. Residue 238–246 (YPILSTGNT) participates in 5-phospho-alpha-D-ribose 1-diphosphate binding. 299 to 301 (THF) provides a ligand contact to uracil.

Belongs to the UPRTase family.

Its subcellular location is the cytoplasm. It is found in the nucleus. This Macaca fascicularis (Crab-eating macaque) protein is Uracil phosphoribosyltransferase homolog (UPRT).